Consider the following 384-residue polypeptide: Adaptive-response sensory kinase SasA (384 aa).

In terms of domain architecture, Histidine kinase spans 162–384; sequence MLAHDLRSPL…SFHFTLPVYR (223 aa). A Phosphohistidine; by autocatalysis modification is found at His-165.

As to quaternary structure, homooligomerizes. Interacts with KaiC. Participates in the KaiABC clock complex, whose core is composed of a KaiC homohexamer, 6 KaiB and up to 6 KaiA dimers. SasA and KaiB(fs) compete to bind to KaiC.

The enzyme catalyses ATP + protein L-histidine = ADP + protein N-phospho-L-histidine.. In terms of biological role, member of the two-component regulatory system SasA/RpaA involved in genome-wide circadian gene expression. One of several clock output pathways. Participates in the Kai clock protein complex, the main circadian regulator in cyanobacteria, via its interaction with KaiC. KaiC enhances the autophosphorylation activity of SasA, which then transfers its phosphate group to RpaA to activate it. In addition to its output function, recruits fold-shifted KaiB (KaiB(fs)) to KaiC to cooperatively form the KaiB(6):KaiC(6) complex (independent of SasA kinase activity). Required for robustness of the circadian rhythm of gene expression and is involved in clock output, also required for adaptation to light/dark cycles. The chain is Adaptive-response sensory kinase SasA from Microcystis aeruginosa (strain NIES-843 / IAM M-2473).